Consider the following 394-residue polypeptide: Phosphoglycerate kinase (394 aa).

Residues 21–23 (DFN), arginine 36, 59–62 (HLGR), arginine 118, and arginine 151 contribute to the substrate site. Position 183 is a phosphoserine (serine 183). The ATP site is built by lysine 201 and glycine 292. Threonine 299 is modified (phosphothreonine). Residues glutamate 323 and 350–353 (GGDS) each bind ATP.

This sequence belongs to the phosphoglycerate kinase family. As to quaternary structure, monomer.

It is found in the cytoplasm. It catalyses the reaction (2R)-3-phosphoglycerate + ATP = (2R)-3-phospho-glyceroyl phosphate + ADP. Its pathway is carbohydrate degradation; glycolysis; pyruvate from D-glyceraldehyde 3-phosphate: step 2/5. The protein is Phosphoglycerate kinase of Bacillus cereus (strain ATCC 10987 / NRS 248).